We begin with the raw amino-acid sequence, 221 residues long: Flagellar L-ring protein 2 (221 aa).

Positions 1–16 are cleaved as a signal peptide; that stretch reads MKRFLILTPMVLALCG. A lipid anchor (N-palmitoyl cysteine) is attached at Cys-17. Cys-17 carries S-diacylglycerol cysteine lipidation.

It belongs to the FlgH family. The basal body constitutes a major portion of the flagellar organelle and consists of four rings (L,P,S, and M) mounted on a central rod.

It is found in the cell outer membrane. The protein resides in the bacterial flagellum basal body. Assembles around the rod to form the L-ring and probably protects the motor/basal body from shearing forces during rotation. This chain is Flagellar L-ring protein 2, found in Yersinia pseudotuberculosis serotype I (strain IP32953).